The chain runs to 116 residues: Photosystem II reaction center Psb28 protein (116 aa).

This sequence belongs to the Psb28 family. As to quaternary structure, part of the photosystem II complex.

It localises to the plastid. The protein resides in the chloroplast thylakoid membrane. In Guillardia theta (Cryptophyte), this protein is Photosystem II reaction center Psb28 protein.